Reading from the N-terminus, the 306-residue chain is Ornithine carbamoyltransferase (306 aa).

Residues 53–56 (STRT), glutamine 80, arginine 104, and 131–134 (HPCQ) contribute to the carbamoyl phosphate site. L-ornithine is bound by residues asparagine 162, aspartate 219, and 223–224 (SM). Carbamoyl phosphate is bound by residues 259–260 (CL) and arginine 287.

It belongs to the aspartate/ornithine carbamoyltransferase superfamily. OTCase family.

The protein localises to the cytoplasm. It carries out the reaction carbamoyl phosphate + L-ornithine = L-citrulline + phosphate + H(+). The protein operates within amino-acid biosynthesis; L-arginine biosynthesis; L-arginine from L-ornithine and carbamoyl phosphate: step 1/3. Functionally, reversibly catalyzes the transfer of the carbamoyl group from carbamoyl phosphate (CP) to the N(epsilon) atom of ornithine (ORN) to produce L-citrulline. In Acinetobacter baylyi (strain ATCC 33305 / BD413 / ADP1), this protein is Ornithine carbamoyltransferase.